We begin with the raw amino-acid sequence, 274 residues long: Protein STAY-GREEN, chloroplastic (274 aa).

A chloroplast-targeting transit peptide spans 1–48; the sequence is MAAATSTMSLLPPITQQQRWHAADSLVVLASRCHNSRRRRRCRYVVPR.

The protein belongs to the staygreen family. Interacts with LHCII complex. In terms of tissue distribution, expressed in leaves, roots and developing seeds.

It localises to the plastid. It is found in the chloroplast membrane. Its subcellular location is the chloroplast stroma. In terms of biological role, involved in the disassembling mechanism of the intact light-harvesting complex of photosystem II (LHCII) in the thylakoid membranes. Required to trigger chlorophyll degradation during natural and dark-induced leaf senescence. The sequence is that of Protein STAY-GREEN, chloroplastic (SGR) from Oryza sativa subsp. japonica (Rice).